Reading from the N-terminus, the 348-residue chain is Selenide, water dikinase (348 aa).

The active site involves selenocysteine 17. Residue selenocysteine 17 is a non-standard amino acid, selenocysteine. ATP contacts are provided by residues lysine 20 and 48-50; that span reads TAD. Residue aspartate 51 coordinates Mg(2+). Residues aspartate 68, aspartate 91, and 138-140 contribute to the ATP site; that span reads GHT. Aspartate 91 provides a ligand contact to Mg(2+). Aspartate 226 is a binding site for Mg(2+).

The protein belongs to the selenophosphate synthase 1 family. Class I subfamily. In terms of assembly, homodimer. Requires Mg(2+) as cofactor.

The enzyme catalyses hydrogenselenide + ATP + H2O = selenophosphate + AMP + phosphate + 2 H(+). Its function is as follows. Synthesizes selenophosphate from selenide and ATP. The protein is Selenide, water dikinase of Clostridioides difficile (strain 630) (Peptoclostridium difficile).